A 185-amino-acid polypeptide reads, in one-letter code: Inner membrane-spanning protein YciB (185 aa).

The next 5 helical transmembrane spans lie at 27 to 47 (IVLV…YGIV), 53 to 73 (IMAS…EIRY), 76 to 96 (WKVT…QFQF), 118 to 138 (TLNL…IYIS), and 149 to 169 (FKSF…GVYI).

This sequence belongs to the YciB family.

Its subcellular location is the cell inner membrane. Plays a role in cell envelope biogenesis, maintenance of cell envelope integrity and membrane homeostasis. This chain is Inner membrane-spanning protein YciB, found in Haemophilus influenzae (strain 86-028NP).